Consider the following 886-residue polypeptide: Vam6/Vps39-like protein (886 aa).

The region spanning 15–294 (PLQIDCLAAW…RFITSGGSNI (280 aa)) is the CNH domain. The CHCR repeat unit spans residues 573–750 (FTEDLPEVES…LLRMYLSPPS (178 aa)).

The protein belongs to the VAM6/VPS39 family. In terms of assembly, homooligomer. Interacts with TGFBR2 and, less efficiently, with TGFBR1; interaction with TGFBR2 is independent of the receptor kinase activity and of the presence of TGF-beta. Also interacts with ACVR2B, but not with BMPR2. Interacts with SMAD4, preferentially following TGF-beta treatment. Does not interact with SAMD2 or SMAD3. Component of the homotypic fusion and vacuole protein sorting (HOPS) complex; the core of which composed of the class C Vps proteins VPS11, VPS16, VPS18 and VPS33A, is associated with VPS39 and VPS41. Interacts with PLEKHM2; involved in VPS39 recruitment to ARL8B-containing lysosomes. Associates with adapter protein complex 3 (AP-3) and clathrin:AP-3 complexes. Interacts with STX17; this interaction is increased in the absence of TMEM39A. Interacts with RAB7, RAB2A and RAB2B. Interacts with RAB2A (GTP-bound); the interaction contributes to obtaining a functional HOPS complex that promotes autophagosome-lysosome membrane fusion driven by STX17-SNAP29-VAMP8. Interacts with RAB39A (GTP-bound) and RAB39B (GTP-bound); interaction with RAB39A contributes to obtaining a functional HOPS complex. (Microbial infection) Interacts with SARS coronavirus-2/SARS-CoV-2 ORF3A protein; the interaction is direct and sequestrates VPS39, thereby preventing HOPS complex from interacting with the autophagosomal SNARE protein STX17. ORF3A enhances the interaction of VPS39 with VPS11 and VPS18, while its interaction with the VPS16:VPS33A module is attenuated. In terms of tissue distribution, widely expressed, with highest levels in heart, skeletal muscle, kidney, pancreas, brain, placenta and spleen.

The protein resides in the cytoplasm. The protein localises to the lysosome membrane. It is found in the late endosome membrane. Regulator of TGF-beta/activin signaling, inhibiting SMAD3- and activating SMAD2-dependent transcription. Acts by interfering with SMAD3/SMAD4 complex formation, this would lead to inhibition of SMAD3-dependent transcription and relieve SMAD3 inhibition of SMAD2-dependent promoters, thus increasing SMAD2-dependent transcription. Does not affect TGF-beta-induced SMAD2 or SMAD3 phosphorylation, nor SMAD2/SMAD4 complex formation. In terms of biological role, plays a role in vesicle-mediated protein trafficking to lysosomal compartments including the endocytic membrane transport and autophagic pathways. Acts as a component of the HOPS endosomal tethering complex. This complex is proposed to be involved in the Rab5-to-Rab7 endosome conversion probably implicating MON1A/B, and via binding SNAREs and SNARE complexes to mediate tethering and docking events during SNARE-mediated membrane fusion. The HOPS complex is proposed to be recruited to Rab7 on the late endosomal membrane and to regulate late endocytic, phagocytic and autophagic traffic towards lysosomes. Involved in homotypic vesicle fusions between late endosomes and in heterotypic fusions between late endosomes and lysosomes. Required for fusion of endosomes and autophagosomes with lysosomes. The protein is Vam6/Vps39-like protein of Homo sapiens (Human).